The chain runs to 273 residues: Anthranilate synthase beta subunit 2, chloroplastic (273 aa).

Residues 1–36 (MAATTLYNSCLLQPKYGFTTRRLNQSLVNSLTNPTR) constitute a chloroplast transit peptide. In terms of domain architecture, Glutamine amidotransferase type-1 spans 71-270 (PIIVIDNYDS…IKLVEKKESE (200 aa)). Cys-149 acts as the Nucleophile in catalysis. Active-site residues include His-244 and Glu-246.

Heterotetramer consisting of two non-identical subunits: a beta subunit and a large alpha subunit.

The protein resides in the plastid. It localises to the chloroplast. The enzyme catalyses chorismate + L-glutamine = anthranilate + pyruvate + L-glutamate + H(+). It functions in the pathway amino-acid biosynthesis; L-tryptophan biosynthesis; L-tryptophan from chorismate: step 1/5. Feedback inhibition by tryptophan. Part of a heterotetrameric complex that catalyzes the two-step biosynthesis of anthranilate, an intermediate in the biosynthesis of L-tryptophan. In the first step, the glutamine-binding beta subunit of anthranilate synthase (AS) provides the glutamine amidotransferase activity which generates ammonia as a substrate that, along with chorismate, is used in the second step, catalyzed by the large alpha subunit of AS to produce anthranilate. The sequence is that of Anthranilate synthase beta subunit 2, chloroplastic (ASB2) from Arabidopsis thaliana (Mouse-ear cress).